The sequence spans 121 residues: Prefoldin subunit beta (121 aa).

Belongs to the prefoldin subunit beta family. In terms of assembly, heterohexamer of two alpha and four beta subunits.

The protein localises to the cytoplasm. In terms of biological role, molecular chaperone capable of stabilizing a range of proteins. Seems to fulfill an ATP-independent, HSP70-like function in archaeal de novo protein folding. In Methanoculleus marisnigri (strain ATCC 35101 / DSM 1498 / JR1), this protein is Prefoldin subunit beta.